We begin with the raw amino-acid sequence, 308 residues long: 4-hydroxyproline 2-epimerase (308 aa).

The active-site Proton acceptor is the cysteine 88. Residues glycine 89 to histidine 90, histidine 208, and aspartate 232 each bind substrate. Cysteine 236 serves as the catalytic Proton donor. Glycine 237–threonine 238 contacts substrate.

It belongs to the proline racemase family.

It carries out the reaction trans-4-hydroxy-L-proline = cis-4-hydroxy-D-proline. Catalyzes the epimerization of trans-4-hydroxy-L-proline (t4LHyp) to cis-4-hydroxy-D-proline (c4DHyp). Is likely involved in a degradation pathway that converts t4LHyp to alpha-ketoglutarate. Can also catalyze the epimerization of trans-3-hydroxy-L-proline (t3LHyp) to cis-3-hydroxy-D-proline (c3DHyp), albeit with 200-fold lower efficiency. The chain is 4-hydroxyproline 2-epimerase from Pseudomonas putida (strain ATCC 700007 / DSM 6899 / JCM 31910 / BCRC 17059 / LMG 24140 / F1).